The chain runs to 488 residues: Probable metabolite transport protein YBR241C (488 aa).

Residues 1-18 (MAETERLMPNGGSRETKP) lie on the Cytoplasmic side of the membrane. The chain crosses the membrane as a helical span at residues 19–39 (LITGHLILGTIVACLGSIQYG). Over 40-87 (YHIAELNAPQEFLSCSRFEAPDENISYDDTWVGQHGLKQCIALTDSQY) the chain is Vacuolar. Asn-63 carries N-linked (GlcNAc...) asparagine glycosylation. The helical transmembrane segment at 88–108 (GAITSIFSIGGLFGSYYAGNW) threads the bilayer. Topologically, residues 109-121 (ANRYGRKYVSMGA) are cytoplasmic. The chain crosses the membrane as a helical span at residues 122 to 142 (SAMCMVSSLLLFFSNSYLQLL). Residues 143-146 (FGRF) lie on the Vacuolar side of the membrane. A helical membrane pass occupies residues 147–167 (LVGMSCGTAIVITPLFINEIA). Residues 168 to 178 (PVEWRGAMGSM) lie on the Cytoplasmic side of the membrane. Residues 179-198 (NQVSINLGILLTQTLALKYA) form a helical membrane-spanning segment. Residues 199 to 204 (DSYNWR) lie on the Vacuolar side of the membrane. A helical membrane pass occupies residues 205-225 (WLLFSGSVIAVANILAWLKVD). Topologically, residues 226–299 (ESPRWLVSHG…DPSYKKPRTV (74 aa)) are cytoplasmic. Residues 258 to 279 (EIQDWQRSHGHNRDPESSEETH) are compositionally biased toward basic and acidic residues. The tract at residues 258–281 (EIQDWQRSHGHNRDPESSEETHSG) is disordered. The chain crosses the membrane as a helical span at residues 300–320 (ILAILSCQQFCGINSIIFYGV). Topologically, residues 321 to 322 (KV) are vacuolar. A helical transmembrane segment spans residues 323–337 (IGKILPDYSIQVNFA). Residues 338 to 344 (ISILNVV) are Cytoplasmic-facing. Residues 345–364 (VTLAASAIIDHVGRRPLLLA) traverse the membrane as a helical segment. Over 365-390 (STTVMTAMSLLISVGLTLSVSFLLVT) the chain is Vacuolar. A helical transmembrane segment spans residues 391-411 (ATFVYIAAFAIGLGPIPFLII). At 412–419 (GELSYPQD) the chain is on the cytoplasmic side. A helical membrane pass occupies residues 420 to 442 (AATAQSFGTVCNWLATFIVGYLF). Over 443-446 (PIGH) the chain is Vacuolar. Residues 447-463 (GLMGGYVFAIFAAIAAM) traverse the membrane as a helical segment. Residues 464–488 (FATYVYKRVPETKGKTTYSEVWAGY) lie on the Cytoplasmic side of the membrane.

This sequence belongs to the major facilitator superfamily. Sugar transporter (TC 2.A.1.1) family.

Its subcellular location is the vacuole membrane. In Saccharomyces cerevisiae (strain ATCC 204508 / S288c) (Baker's yeast), this protein is Probable metabolite transport protein YBR241C.